We begin with the raw amino-acid sequence, 722 residues long: MKEQNLNKYDEITVQAASDYIDIRPIFQTNGSATFNSNTNITTLTQAINSQAGAIAGKTALDMRHDFTFRADIFLGTKSNGADGIAIAFHRGSIGFVGTKGGGLGILGAPKGIGFELDTYANAPEDEVGDSFGHGAMKGSFPSFPNGYPHAGFVSTDKNSRWLSALAQMQRIAAPNGRWRRLEIRWDARNKELTANLQDLTFNDITVGEKPRTPRTATWRLVNPAFELDQKYTFVIGSATGASNNLHQIGIIEFDAYFTKPTIEANNVNVPVGATFNPKTYPGINLRATDEIDGDLTSKIIVKANNVNTSKTGVYYVTYYVENSYGESDEKTIEVTVFSNPTIIASDVEIEKGESFNPLTDSRVGLSAQDSLGNDITQNVKVKSSNVDTSKPGEYEVVFEVTDSFGGKAEKDFKVTVLGQPSIEANNVELEIDDSLDPLTDAKVGLRAKDSLGNDITKDIKVKFNNVDTSNSGKYEVIFEVTDRFGKKAEKSIEVLVLGEPSIEANDVEVNKGETFEPLTDSRVGLRAKDSLGNDITKDVKIKSSNVDTSKPGEYEVVFEVTDRFGKYVEKTIGVIVPVIDDEWEDGNVNGWKFYAGQDIKLLKDPDKAYKGDYVFYDSRHVAISKTIPLTDLQINTNYEITVYAKAESGDHHLKVTYKKDPAGPEEPPVFNRLISTGTLVEKDYRELKGTFRVTELNKAPLIIVENFGAGYIGGIRIVKIS.

Its function is as follows. Promotes colloidosmotic lysis by binding to the midgut epithelial cells of hymenopteran species. This is Pesticidal crystal protein Cry22Aa (cry22Aa) from Bacillus thuringiensis.